Consider the following 536-residue polypeptide: Arylsulfatase (536 aa).

Positions 13, 14, and 51 each coordinate Ca(2+). C51 functions as the Nucleophile in the catalytic mechanism. C51 is modified (3-oxoalanine (Cys)). The active site involves H115. The Ca(2+) site is built by D317 and N318.

This sequence belongs to the sulfatase family. As to quaternary structure, monomer. Ca(2+) serves as cofactor. Post-translationally, the conversion to 3-oxoalanine (also known as C-formylglycine, FGly), of a serine or cysteine residue in prokaryotes and of a cysteine residue in eukaryotes, is critical for catalytic activity.

It is found in the cytoplasm. The enzyme catalyses an aryl sulfate + H2O = a phenol + sulfate + H(+). Its function is as follows. Hydrolyzes the bond between sulfate and the aromatic ring in a compound such as 4-nitrocatechol sulfate. The protein is Arylsulfatase (atsA) of Pseudomonas aeruginosa (strain ATCC 15692 / DSM 22644 / CIP 104116 / JCM 14847 / LMG 12228 / 1C / PRS 101 / PAO1).